The following is a 154-amino-acid chain: Decarboxylase claH (154 aa).

It belongs to the tpcK family.

The enzyme catalyses atrochrysone carboxylate + H(+) = atrochrysone + CO2. It participates in pigment biosynthesis. In terms of biological role, decarboxylase involved in the biosynthesis of the bianthraquinone cladofulvin, a conidial pigment not required for virulence but that plays a role in fitness and resistance to environmental stresses including UV light and low-temperature stress. The pathway begins with the synthesis of atrochrysone thioester by the polyketide synthase (PKS) claG. The atrochrysone carboxyl ACP thioesterase claF then breaks the thioester bond and releases the atrochrysone carboxylic acid from claG. This compound is decarboxylated by claH to yield emodin, which is further converted to chrysophanol hydroquinone by the reductase claC and the dehydratase claB. The cytochrome monooxygenase P450 claM then catalyzes the dimerization of nataloe-emodin to cladofulvin. The sequence is that of Decarboxylase claH from Passalora fulva (Tomato leaf mold).